The primary structure comprises 1348 residues: Vascular endothelial growth factor receptor 2 (1348 aa).

The signal sequence occupies residues 1–20 (MELGPLRVLTVLLCLAPVFA). At 21 to 756 (GLFISMDQPT…GAEEKTNLEL (736 aa)) the chain is on the extracellular side. 20 N-linked (GlcNAc...) asparagine glycosylation sites follow: asparagine 43, asparagine 47, asparagine 63, asparagine 93, asparagine 138, asparagine 153, asparagine 201, asparagine 240, asparagine 290, asparagine 310, asparagine 365, asparagine 386, asparagine 513, asparagine 556, asparagine 603, asparagine 613, asparagine 622, asparagine 666, asparagine 688, and asparagine 710. Ig-like C2-type domains lie at 43 to 106 (NDTL…GDSQ), 138 to 202 (NKTV…IDNE), 220 to 312 (DLTM…KNSS), 320 to 405 (PFIH…HTFT), 412 to 534 (PQIG…RVIS), 540 to 651 (GLEI…KHLT), and 658 to 744 (PRLV…AFFS). Cysteine 50 and cysteine 100 are oxidised to a cystine. Cysteines 145 and 195 form a disulfide. An intrachain disulfide couples cysteine 241 to cysteine 299. A disulfide bridge connects residues cysteine 436 and cysteine 520. A disulfide bridge connects residues cysteine 561 and cysteine 633. A disulfide bridge links cysteine 679 with cysteine 728. Residues 757–777 (IILVGTAVIAMFFWLLLVIIL) traverse the membrane as a helical segment. Over 778 to 1348 (RTVKRANGGD…SPAPVASLPL (571 aa)) the chain is Cytoplasmic. The Protein kinase domain maps to 825 to 1155 (LKLGKPLGRG…FSELVEHLGN (331 aa)). ATP-binding positions include 831–839 (LGRGAFGQV) and lysine 859. A compositionally biased stretch (low complexity) spans 958-967 (ITSSQSSTSS). Residues 958-983 (ITSSQSSTSSGFVEERSLSDVEEEDA) form a disordered region. The Proton acceptor role is filled by aspartate 1021. Phosphotyrosine; by autocatalysis occurs at positions 1047, 1052, 1168, and 1207. The tract at residues 1280–1302 (PSKSNESVMSEASNQTSGYQSGY) is disordered.

This sequence belongs to the protein kinase superfamily. Tyr protein kinase family. CSF-1/PDGF receptor subfamily. In terms of processing, autophosphorylated on tyrosine residues upon ligand binding. Autophosphorylation occurs in trans, i.e. one subunit of the dimeric receptor phosphorylates tyrosine residues on the other subunit. As to expression, in all endothelial tissues during onset of vascularization. In later development, present in lung, heart, intestine and skin.

It localises to the cell membrane. The protein localises to the cytoplasmic vesicle. It is found in the early endosome. The protein resides in the cell junction. Its subcellular location is the endoplasmic reticulum. The enzyme catalyses L-tyrosyl-[protein] + ATP = O-phospho-L-tyrosyl-[protein] + ADP + H(+). Present in an inactive conformation in the absence of bound ligand. Binding of VEGFA, VEGFC or VEGFD leads to dimerization and activation by autophosphorylation on tyrosine residues. Tyrosine-protein kinase that acts as a cell-surface receptor for VEGFA, VEGFC and/or VEGFD and plays an essential role in the regulation of angiogenesis and vascular development. Promotes proliferation, survival, migration and differentiation of endothelial cells. Promotes reorganization of the actin cytoskeleton. Binding of vascular growth factors leads to the activation of several signaling cascades. Activation of PLCG1 leads to the production of the cellular signaling molecules diacylglycerol and inositol 1,4,5-trisphosphate and the activation of protein kinase C. Mediates activation of MAPK1/ERK2, MAPK3/ERK1 and the MAP kinase signaling pathway, as well as of the AKT1 signaling pathway. Mediates phosphorylation of PIK3R1, the regulatory subunit of phosphatidylinositol 3-kinase, reorganization of the actin cytoskeleton and activation of PTK2/FAK1. Required for VEGFA-mediated induction of NOS2 and NOS3, leading to the production of the signaling molecule nitric oxide (NO) by endothelial cells. The polypeptide is Vascular endothelial growth factor receptor 2 (Coturnix japonica (Japanese quail)).